A 230-amino-acid polypeptide reads, in one-letter code: MPKHGKKYLDAAKKVDSNKLYSVAEAMKLVKETSYANFDATIDVAYNLSVDPKQADQQIRGSIVLPNGTGKTQTVVVFAEGPQAEQAKAAGADFVGSDDLVEKIQGGWLDFDVVVATPMMMAKVGRLGRVLGPKGLMPNPKTGTVTMDIEKAVKNVKAGQVEYRVDRQAAIHTPIGKVSFTEDQLVENFDALRDVILRARPASAKGQYIKSVAVSATFGPGIKLDPLNLD.

This sequence belongs to the universal ribosomal protein uL1 family. In terms of assembly, part of the 50S ribosomal subunit.

Functionally, binds directly to 23S rRNA. The L1 stalk is quite mobile in the ribosome, and is involved in E site tRNA release. Its function is as follows. Protein L1 is also a translational repressor protein, it controls the translation of the L11 operon by binding to its mRNA. The protein is Large ribosomal subunit protein uL1 of Lactobacillus acidophilus (strain ATCC 700396 / NCK56 / N2 / NCFM).